Here is a 680-residue protein sequence, read N- to C-terminus: Methionine--tRNA ligase (680 aa).

The short motif at 15-25 is the 'HIGH' region element; it reads PYANGPVHIGH. 4 residues coordinate Zn(2+): Cys147, Cys150, Cys160, and Cys163. The short motif at 332-336 is the 'KMSKS' region element; that stretch reads KISTS. An ATP-binding site is contributed by Thr335. A tRNA-binding domain is found at 578–680; that stretch reads EFEKLDIRVG…REVKPGSEVK (103 aa).

It belongs to the class-I aminoacyl-tRNA synthetase family. MetG type 1 subfamily. As to quaternary structure, homodimer. Zn(2+) serves as cofactor.

The protein resides in the cytoplasm. The catalysed reaction is tRNA(Met) + L-methionine + ATP = L-methionyl-tRNA(Met) + AMP + diphosphate. In terms of biological role, is required not only for elongation of protein synthesis but also for the initiation of all mRNA translation through initiator tRNA(fMet) aminoacylation. In Phocaeicola vulgatus (strain ATCC 8482 / DSM 1447 / JCM 5826 / CCUG 4940 / NBRC 14291 / NCTC 11154) (Bacteroides vulgatus), this protein is Methionine--tRNA ligase.